The following is an 86-amino-acid chain: Large ribosomal subunit protein uL23 (86 aa).

It belongs to the universal ribosomal protein uL23 family. As to quaternary structure, part of the 50S ribosomal subunit. Contacts protein L29.

In terms of biological role, binds to 23S rRNA. One of the proteins that surrounds the polypeptide exit tunnel on the outside of the ribosome. This chain is Large ribosomal subunit protein uL23, found in Thermococcus sibiricus (strain DSM 12597 / MM 739).